A 247-amino-acid chain; its full sequence is Adenosylcobinamide-GDP ribazoletransferase (247 aa).

5 helical membrane-spanning segments follow: residues 34–54 (IITFPLIGLLLGAISGLVFMA), 59–79 (FGVPLAALFSVLVLALMTGGF), 113–133 (GGLALIFVVLAKILVLSELAL), 138–158 (ILASLAAACAVSRGTAALLMY), and 194–214 (VLLPGMHGVAAMVVTMVAIFI).

Belongs to the CobS family. Mg(2+) is required as a cofactor.

It localises to the cell inner membrane. The catalysed reaction is alpha-ribazole + adenosylcob(III)inamide-GDP = adenosylcob(III)alamin + GMP + H(+). It catalyses the reaction alpha-ribazole 5'-phosphate + adenosylcob(III)inamide-GDP = adenosylcob(III)alamin 5'-phosphate + GMP + H(+). The protein operates within cofactor biosynthesis; adenosylcobalamin biosynthesis; adenosylcobalamin from cob(II)yrinate a,c-diamide: step 7/7. Functionally, joins adenosylcobinamide-GDP and alpha-ribazole to generate adenosylcobalamin (Ado-cobalamin). Also synthesizes adenosylcobalamin 5'-phosphate from adenosylcobinamide-GDP and alpha-ribazole 5'-phosphate. This Escherichia coli O17:K52:H18 (strain UMN026 / ExPEC) protein is Adenosylcobinamide-GDP ribazoletransferase.